A 481-amino-acid chain; its full sequence is Arylsulfatase (481 aa).

Aspartate 11, glutamine 12, and cysteine 51 together coordinate Ca(2+). Cysteine 51 serves as the catalytic Nucleophile. At cysteine 51 the chain carries 3-oxoalanine (Cys). Histidine 102 is a catalytic residue. Ca(2+) contacts are provided by aspartate 302 and histidine 303.

The protein belongs to the sulfatase family. Requires Ca(2+) as cofactor. Post-translationally, the conversion to 3-oxoalanine (also known as C-formylglycine, FGly), of a serine or cysteine residue in prokaryotes and of a cysteine residue in eukaryotes, is critical for catalytic activity.

The catalysed reaction is an aryl sulfate + H2O = a phenol + sulfate + H(+). In terms of biological role, has sulfatase activity toward para-nitrophenyl sulfate, which is increased in presence of calcium ion. The polypeptide is Arylsulfatase (Clostridium perfringens (strain 13 / Type A)).